The following is a 356-amino-acid chain: DNA polymerase IV (356 aa).

Positions 1–188 (MDTSRKIIHI…IPVTKFYGVG (188 aa)) constitute a UmuC domain. Mg(2+) contacts are provided by Asp11 and Asp106. Residue Glu107 is part of the active site.

The protein belongs to the DNA polymerase type-Y family. As to quaternary structure, monomer. Mg(2+) serves as cofactor.

The protein resides in the cytoplasm. The catalysed reaction is DNA(n) + a 2'-deoxyribonucleoside 5'-triphosphate = DNA(n+1) + diphosphate. Poorly processive, error-prone DNA polymerase involved in untargeted mutagenesis. Copies undamaged DNA at stalled replication forks, which arise in vivo from mismatched or misaligned primer ends. These misaligned primers can be extended by PolIV. Exhibits no 3'-5' exonuclease (proofreading) activity. May be involved in translesional synthesis, in conjunction with the beta clamp from PolIII. The protein is DNA polymerase IV of Listeria monocytogenes serovar 1/2a (strain ATCC BAA-679 / EGD-e).